A 107-amino-acid polypeptide reads, in one-letter code: Large ribosomal subunit protein bL21c (107 aa).

It belongs to the bacterial ribosomal protein bL21 family. Part of the 50S ribosomal subunit.

Its subcellular location is the plastid. It is found in the chloroplast. Functionally, this protein binds to 23S rRNA. This chain is Large ribosomal subunit protein bL21c, found in Cyanidioschyzon merolae (strain NIES-3377 / 10D) (Unicellular red alga).